We begin with the raw amino-acid sequence, 1073 residues long: Carbamoyl phosphate synthase large chain (1073 aa).

The carboxyphosphate synthetic domain stretch occupies residues proline 2 to glutamate 403. Arginine 129, arginine 169, glycine 175, glycine 176, glutamate 208, leucine 210, glutamate 215, glycine 241, isoleucine 242, histidine 243, glutamine 285, and glutamate 299 together coordinate ATP. One can recognise an ATP-grasp 1 domain in the interval aspartate 133–valine 328. Mg(2+) is bound by residues glutamine 285, glutamate 299, and asparagine 301. Mn(2+) is bound by residues glutamine 285, glutamate 299, and asparagine 301. Positions valine 404 to alanine 553 are oligomerization domain. The tract at residues asparagine 554–asparagine 936 is carbamoyl phosphate synthetic domain. Residues glutamine 679–alanine 870 enclose the ATP-grasp 2 domain. Residues arginine 715, histidine 754, leucine 756, glutamate 761, glycine 786, valine 787, histidine 788, serine 789, glutamine 829, and glutamate 841 each contribute to the ATP site. Mg(2+)-binding residues include glutamine 829, glutamate 841, and asparagine 843. Mn(2+) is bound by residues glutamine 829, glutamate 841, and asparagine 843. The MGS-like domain occupies serine 937–lysine 1073. Residues serine 937–lysine 1073 are allosteric domain.

It belongs to the CarB family. Composed of two chains; the small (or glutamine) chain promotes the hydrolysis of glutamine to ammonia, which is used by the large (or ammonia) chain to synthesize carbamoyl phosphate. Tetramer of heterodimers (alpha,beta)4. The cofactor is Mg(2+). Mn(2+) is required as a cofactor.

It carries out the reaction hydrogencarbonate + L-glutamine + 2 ATP + H2O = carbamoyl phosphate + L-glutamate + 2 ADP + phosphate + 2 H(+). It catalyses the reaction hydrogencarbonate + NH4(+) + 2 ATP = carbamoyl phosphate + 2 ADP + phosphate + 2 H(+). Its pathway is amino-acid biosynthesis; L-arginine biosynthesis; carbamoyl phosphate from bicarbonate: step 1/1. The protein operates within pyrimidine metabolism; UMP biosynthesis via de novo pathway; (S)-dihydroorotate from bicarbonate: step 1/3. Functionally, large subunit of the glutamine-dependent carbamoyl phosphate synthetase (CPSase). CPSase catalyzes the formation of carbamoyl phosphate from the ammonia moiety of glutamine, carbonate, and phosphate donated by ATP, constituting the first step of 2 biosynthetic pathways, one leading to arginine and/or urea and the other to pyrimidine nucleotides. The large subunit (synthetase) binds the substrates ammonia (free or transferred from glutamine from the small subunit), hydrogencarbonate and ATP and carries out an ATP-coupled ligase reaction, activating hydrogencarbonate by forming carboxy phosphate which reacts with ammonia to form carbamoyl phosphate. This is Carbamoyl phosphate synthase large chain from Escherichia coli (strain K12).